Reading from the N-terminus, the 605-residue chain is F-box/WD repeat-containing protein pof1 (605 aa).

The F-box domain maps to 107 to 153; the sequence is LDFLSLLPVEISFRILSFLDARSLCQAAQVSKHWKELADDDVIWHRM. A compositionally biased stretch (basic and acidic residues) spans 195–212; it reads GVDQAHESSPVKKAKLDD. A disordered region spans residues 195–231; sequence GVDQAHESSPVKKAKLDDYPTSSNEETISSVKPPSPN. Residues 214–231 are compositionally biased toward polar residues; the sequence is PTSSNEETISSVKPPSPN. Phosphoserine occurs at positions 229 and 232. WD repeat units follow at residues 271–299, 311–339, 350–379, 390–420, 432–460, 472–500, and 510–538; these read GHSD…RLWN, GHSS…RIWN, HGHT…KLWH, GHTG…KIWS, AHIG…KQWD, GHIE…KVWE, and NHSE…YLWL.

In terms of assembly, a part of the E3 ubiquitin ligase Skp1-Cullin-1-F-box (SCF) complex. Interacts with cul1, skp1 and phosphorylated zip1.

The protein resides in the nucleus. Probably recognizes and binds to some phosphorylated proteins and promotes their ubiquitination and degradation. Required for the inactivation of zip1 via ubiquitination. The chain is F-box/WD repeat-containing protein pof1 (pof1) from Schizosaccharomyces pombe (strain 972 / ATCC 24843) (Fission yeast).